Reading from the N-terminus, the 443-residue chain is SURP and G-patch domain-containing protein 1-like protein (443 aa).

Disordered stretches follow at residues 45–71 and 83–141; these read IISN…KGGK and LAPP…TVKK. The SURP motif repeat unit spans residues 142–185; that stretch reads VADKLASFVAKHGRPFEHITRQKNPGDTPFKFLFDENCADYKYY. 3 disordered regions span residues 198–221, 241–272, and 285–325; these read QTKD…AIPL, TPVE…RGAD, and AQEE…HHMG. Polar residues predominate over residues 248–265; that stretch reads SSRSAQASITRPSDSDSF. The span at 285-300 shows a compositional bias: basic and acidic residues; the sequence is AQEEKMRRPRQSKDEM. Positions 307–316 are enriched in polar residues; the sequence is QGPSETSSTD. In terms of domain architecture, G-patch spans 360-407; the sequence is ADNVGHKLLSKMGWKEGEGIGSSRKGMADPIMAGDVKTNNLGVGASAP.

It localises to the nucleus. This is SURP and G-patch domain-containing protein 1-like protein from Arabidopsis thaliana (Mouse-ear cress).